Reading from the N-terminus, the 580-residue chain is Peptidyl-prolyl cis-trans isomerase-like 2 (580 aa).

Positions 42–115 (KRLPFRFCSL…GEYIDPVTYK (74 aa)) constitute a U-box domain. 5 disordered regions span residues 182–201 (IKEG…EDPS), 227–259 (QERA…SYQS), 439–459 (SPTL…RPTP), 479–530 (QKKQ…SSTT), and 553–580 (FVDE…SSWD). Residues 309–468 (QKGYARISTT…PDIRIVDVTI (160 aa)) enclose the PPIase cyclophilin-type domain. A compositionally biased stretch (polar residues) spans 439-457 (SPTLNKLETHPVNPTTNRP). The span at 490–507 (EANRTAENDEEGSRRAED) shows a compositional bias: basic and acidic residues.

It belongs to the cyclophilin-type PPIase family. PPIL2 subfamily.

The protein resides in the nucleus. The catalysed reaction is [protein]-peptidylproline (omega=180) = [protein]-peptidylproline (omega=0). It carries out the reaction S-ubiquitinyl-[E2 ubiquitin-conjugating enzyme]-L-cysteine + [acceptor protein]-L-lysine = [E2 ubiquitin-conjugating enzyme]-L-cysteine + N(6)-ubiquitinyl-[acceptor protein]-L-lysine.. It participates in protein modification; protein ubiquitination. Its function is as follows. May catalyze the cis-trans isomerization of proline imidic peptide bonds in oligopeptides thereby assisting the folding of proteins. May also function as a chaperone, playing a role in intracellular transport of proteins. May also have a protein ubiquitin ligase activity acting as an E3 ubiquitin protein ligase or as a ubiquitin-ubiquitin ligase promoting elongation of ubiquitin chains on proteins. The sequence is that of Peptidyl-prolyl cis-trans isomerase-like 2 (cyp8) from Emericella nidulans (strain FGSC A4 / ATCC 38163 / CBS 112.46 / NRRL 194 / M139) (Aspergillus nidulans).